Reading from the N-terminus, the 125-residue chain is MSKEEILEAIKNMTVLELAELVKALEEEFGVSAAAPVAVAAAPAAGAPAAAPAEEKTEFDVILQEVGSDKIKVIKVVREVTGLGLKEAKDLVESAPKPVKEGVSKDEANQIKAKFEEVGAKVEIK.

This sequence belongs to the bacterial ribosomal protein bL12 family. As to quaternary structure, homodimer. Part of the ribosomal stalk of the 50S ribosomal subunit. Forms a multimeric L10(L12)X complex, where L10 forms an elongated spine to which 2 to 4 L12 dimers bind in a sequential fashion. Binds GTP-bound translation factors.

Its function is as follows. Forms part of the ribosomal stalk which helps the ribosome interact with GTP-bound translation factors. Is thus essential for accurate translation. This Thermoanaerobacter sp. (strain X514) protein is Large ribosomal subunit protein bL12.